Consider the following 144-residue polypeptide: Maximins 3/H16 (144 aa).

Positions 1–18 are cleaved as a signal peptide; it reads MNFKYIVAVSFLIASAYA. Propeptides lie at residues 19-43 and 73-122; these read RSVQNDEQSLSQRDVLEEESLREIR and RTAE…KKEK. I143 is modified (isoleucine amide).

This sequence belongs to the bombinin family. As to expression, expressed by the skin glands.

It is found in the secreted. Functionally, maximin-3 shows antibacterial activity against both Gram-positive and Gram-negative bacteria. It also shows antimicrobial activity against the fungus C.albicans, but not against A.flavus nor P.uticale. It has little hemolytic activity. It possess a significant cytotoxicity against tumor cell lines. It possess a significant anti-HIV activity. It shows high spermicidal activity. In terms of biological role, maximin-H16 shows antimicrobial activity against bacteria and against the fungus C.albicans. Shows strong hemolytic activity. The polypeptide is Maximins 3/H16 (Bombina maxima (Giant fire-bellied toad)).